Reading from the N-terminus, the 536-residue chain is Phosphoenolpyruvate carboxykinase (ATP) (536 aa).

Substrate is bound by residues Arg61, Tyr195, and Lys201. ATP is bound by residues Lys201, His220, and 236–244 (GLSGTGKTT). Mn(2+) is bound by residues Lys201 and His220. Asp257 is a Mn(2+) binding site. ATP is bound by residues Glu285, Arg322, and Thr447. Arg322 is a binding site for substrate.

The protein belongs to the phosphoenolpyruvate carboxykinase (ATP) family. The cofactor is Mn(2+).

The protein resides in the cytoplasm. The enzyme catalyses oxaloacetate + ATP = phosphoenolpyruvate + ADP + CO2. It participates in carbohydrate biosynthesis; gluconeogenesis. In terms of biological role, involved in the gluconeogenesis. Catalyzes the conversion of oxaloacetate (OAA) to phosphoenolpyruvate (PEP) through direct phosphoryl transfer between the nucleoside triphosphate and OAA. This chain is Phosphoenolpyruvate carboxykinase (ATP), found in Brucella suis biovar 1 (strain 1330).